A 105-amino-acid chain; its full sequence is Heat shock protein HspQ (105 aa).

It belongs to the HspQ family.

Its subcellular location is the cytoplasm. Involved in the degradation of certain denaturated proteins, including DnaA, during heat shock stress. This Salmonella choleraesuis (strain SC-B67) protein is Heat shock protein HspQ.